A 589-amino-acid chain; its full sequence is NADPH-dependent diflavin oxidoreductase 1 (589 aa).

The Flavodoxin-like domain maps to 5 to 151 (ITILYGSETG…YYIEWEAELI (147 aa)). Residues 11 to 16 (SETGNA), 60 to 63 (STTG), 98 to 107 (VGDSSYVKYN), and glutamate 133 each bind FMN. In terms of domain architecture, FAD-binding FR-type spans 202-439 (DGLKLGTVLE…SIQRSSFKYK (238 aa)). Residues arginine 349, 380–383 (RMFS), and 412–415 (GVCT) contribute to the FAD site. Residues threonine 452 and 507-508 (SR) each bind NADP(+). Tryptophan 589 is an FAD binding site.

This sequence belongs to the NADPH-dependent diflavin oxidoreductase NDOR1 family. It in the N-terminal section; belongs to the flavodoxin family. In the C-terminal section; belongs to the flavoprotein pyridine nucleotide cytochrome reductase family. Interacts with DRE2; as part of the cytosolic iron-sulfur (Fe-S) protein assembly (CIA) machinery. FAD is required as a cofactor. It depends on FMN as a cofactor.

The protein localises to the cytoplasm. The protein resides in the mitochondrion. It carries out the reaction 2 oxidized [2Fe-2S]-[protein] + NADPH = 2 reduced [2Fe-2S]-[protein] + NADP(+) + H(+). NADPH-dependent reductase which is a central component of the cytosolic iron-sulfur (Fe-S) protein assembly (CIA) machinery. Transfers electrons from NADPH via its FAD and FMN prosthetic groups to the [2Fe-2S] cluster of DRE2, another key component of the CIA machinery. In turn, this reduced cluster provides electrons for assembly of cytosolic iron-sulfur cluster proteins. Positively controls H(2)O(2)-induced cell death. This Candida albicans (strain SC5314 / ATCC MYA-2876) (Yeast) protein is NADPH-dependent diflavin oxidoreductase 1.